The chain runs to 73 residues: MPKICQITKKKSMLGQNRSHAMNATKKKFSLNIQYHTFWLPEKKKKIRIRITKKGIRMINKFGISKIYKKYII.

This sequence belongs to the bacterial ribosomal protein bL28 family.

In Buchnera aphidicola subsp. Cinara cedri (strain Cc), this protein is Large ribosomal subunit protein bL28.